A 176-amino-acid polypeptide reads, in one-letter code: Transcription factor E (176 aa).

Residues 8-90 (EDPVIQKYLH…LWTFQYEKIP (83 aa)) form the HTH TFE/IIEalpha-type domain.

The protein belongs to the TFE family. As to quaternary structure, monomer. Interaction with RNA polymerase subunits RpoF and RpoE is necessary for Tfe stimulatory transcription activity. Able to interact with Tbp and RNA polymerase in the absence of DNA promoter. Interacts both with the preinitiation and elongation complexes.

Functionally, transcription factor that plays a role in the activation of archaeal genes transcribed by RNA polymerase. Facilitates transcription initiation by enhancing TATA-box recognition by TATA-box-binding protein (Tbp), and transcription factor B (Tfb) and RNA polymerase recruitment. Not absolutely required for transcription in vitro, but particularly important in cases where Tbp or Tfb function is not optimal. It dynamically alters the nucleic acid-binding properties of RNA polymerases by stabilizing the initiation complex and destabilizing elongation complexes. Seems to translocate with the RNA polymerase following initiation and acts by binding to the non template strand of the transcription bubble in elongation complexes. The sequence is that of Transcription factor E from Haloarcula marismortui (strain ATCC 43049 / DSM 3752 / JCM 8966 / VKM B-1809) (Halobacterium marismortui).